The sequence spans 103 residues: Co-chaperonin GroES (103 aa).

This sequence belongs to the GroES chaperonin family. Heptamer of 7 subunits arranged in a ring. Interacts with the chaperonin GroEL.

The protein resides in the cytoplasm. Functionally, together with the chaperonin GroEL, plays an essential role in assisting protein folding. The GroEL-GroES system forms a nano-cage that allows encapsulation of the non-native substrate proteins and provides a physical environment optimized to promote and accelerate protein folding. GroES binds to the apical surface of the GroEL ring, thereby capping the opening of the GroEL channel. The sequence is that of Co-chaperonin GroES from Nostoc sp. (strain PCC 7120 / SAG 25.82 / UTEX 2576).